The chain runs to 414 residues: Esterase FrsA (414 aa).

Belongs to the FrsA family.

The enzyme catalyses a carboxylic ester + H2O = an alcohol + a carboxylate + H(+). Catalyzes the hydrolysis of esters. The sequence is that of Esterase FrsA from Shigella flexneri serotype 5b (strain 8401).